Reading from the N-terminus, the 251-residue chain is tRNA1(Val) (adenine(37)-N6)-methyltransferase (251 aa).

It belongs to the methyltransferase superfamily. tRNA (adenine-N(6)-)-methyltransferase family.

The protein localises to the cytoplasm. It carries out the reaction adenosine(37) in tRNA1(Val) + S-adenosyl-L-methionine = N(6)-methyladenosine(37) in tRNA1(Val) + S-adenosyl-L-homocysteine + H(+). Functionally, specifically methylates the adenine in position 37 of tRNA(1)(Val) (anticodon cmo5UAC). The protein is tRNA1(Val) (adenine(37)-N6)-methyltransferase of Shewanella frigidimarina (strain NCIMB 400).